We begin with the raw amino-acid sequence, 704 residues long: Elongation factor G (704 aa).

The 284-residue stretch at 8-291 (DKVRNIGIMA…AVVDYLASPL (284 aa)) folds into the tr-type G domain. GTP contacts are provided by residues 17-24 (AHIDAGKT), 90-94 (DTPGH), and 144-147 (NKMD).

This sequence belongs to the TRAFAC class translation factor GTPase superfamily. Classic translation factor GTPase family. EF-G/EF-2 subfamily.

The protein localises to the cytoplasm. Catalyzes the GTP-dependent ribosomal translocation step during translation elongation. During this step, the ribosome changes from the pre-translocational (PRE) to the post-translocational (POST) state as the newly formed A-site-bound peptidyl-tRNA and P-site-bound deacylated tRNA move to the P and E sites, respectively. Catalyzes the coordinated movement of the two tRNA molecules, the mRNA and conformational changes in the ribosome. The sequence is that of Elongation factor G from Chlorobium luteolum (strain DSM 273 / BCRC 81028 / 2530) (Pelodictyon luteolum).